The following is a 200-amino-acid chain: dITP/XTP pyrophosphatase (200 aa).

A substrate-binding site is contributed by 7 to 12; it reads SNNRGK. D68 (proton acceptor) is an active-site residue. Residue D68 coordinates Mg(2+). Substrate contacts are provided by residues A69, 154 to 157, K177, and 182 to 183; these read FGFD and HR.

The protein belongs to the HAM1 NTPase family. As to quaternary structure, homodimer. Mg(2+) is required as a cofactor.

It catalyses the reaction XTP + H2O = XMP + diphosphate + H(+). The enzyme catalyses dITP + H2O = dIMP + diphosphate + H(+). It carries out the reaction ITP + H2O = IMP + diphosphate + H(+). Its function is as follows. Pyrophosphatase that catalyzes the hydrolysis of nucleoside triphosphates to their monophosphate derivatives, with a high preference for the non-canonical purine nucleotides XTP (xanthosine triphosphate), dITP (deoxyinosine triphosphate) and ITP. Seems to function as a house-cleaning enzyme that removes non-canonical purine nucleotides from the nucleotide pool, thus preventing their incorporation into DNA/RNA and avoiding chromosomal lesions. This is dITP/XTP pyrophosphatase from Delftia acidovorans (strain DSM 14801 / SPH-1).